A 2339-amino-acid polypeptide reads, in one-letter code: MGIKLRRLTAGICLITQLAFPMAAAAQGVVNAATQQPVPAQIAIANANTVPYTLGALESAQSVAERFGISVAELRKLNQFRTFARGFDNVRQGDELDVPAQVSEKKLTPPPGNSSDNLEQQIASTSQQIGSLLAEDMNSEQAANMARGWASSQASGAMTDWLSRFGTARITLGVDEDFSLKNSQFDFLHPWYETPDNLFFSQHTLHRTDERTQINNGLGWRHFTPTWMSGINFFFDHDLSRYHSRAGIGAEYWRDYLKLSSNGYLRLTNWRSAPELDNDYEARPANGWDVRAESWLPAWPHLGGKLVYEQYYGDEVALFDKDDRQSNPHAITAGLNYTPFPLMTFSAEQRQGKQGENDTRFAVDFTWQPGSAMQKQLDPNEVAARRSLAGSRYDLVDRNNNIVLEYRKKELVRLTLTDPVTGKSGEVKSLVSSLQTKYALKGYNVEATALEAAGGKVVTTGKDILVTLPAYRFTSTPETDNTWPIEVTAEDVKGNLSNREQSMVVVQAPTLSQKDSSVSLSTQTLNADSHSTATLTFIAHDAAGNPVVGLVLSTRHEGVQDITLSDWKDNGDGSYTQILTTGAMSGTLTLMPQLNGVDAAKAPAVVNIISVSSSRTHSSIKIDKDRYLSGNPIEVTVELRDENDKPVKEQKQQLNNAVSIDNVKPGVTTDWKETADGVYKATYTAYTKGSGLTAKLLMQNWNEDLHTAGFIIDANPQSAKIATLSASNNGVLANENAANTVSVNVADEGSNPINDHTVTFAVLSGSATSFNNQNTAKTDVNGLATFDLKSSKQEDNTVEVTLENGVKQTLIVSFVGDSSTAQVDLQKSKNEVVADGNDSVTMTATVRDAKGNLLNDVMVTFNVNSAEAKLSQTEVNSHDGIATATLTSLKNGDYRVTASVSSGSQANQQVNFIGDQSTAALTLSVPSGDITVTNTAPQYMTATLQDKNGNPLKDKEITFSVPNDVASKFSISNGGKGMTDSNGVAIASLTGTLAGTHMIMARLANSNVSDAQPMTFVADKDRAVVVLQTSKAEIIGNGVDETTLTATVKDPSNHPVAGITVNFTMPQDVAANFTLENNGIAITQANGEAHVTLKGKKAGTHTVTATLGNNNTSDSQPVTFVADKASAQVVLQISKDEITGNGVDSATLTATVKDQFDNEVNNLPVTFSSASSGLTLTPGVSNTNESGIAQATLAGVAFGEKTVTASLANNGASDNKTVHFIGDTAAAKIIELAPVPDSIIAGTPQNSSGSVITATVVDNNGFPVKGVTVNFTSNAATAEMTNGGQAVTNEQGKATVTYTNTRSSIESGARPDTVEASLENGSSTLSTSINVNADASTAHLTLLQALFDTVSAGETTSLYIEVKDNYGNGVPQQEVTLSVSPSEGVTPSNNAIYTTNHDGNFYASFTATKAGVYQLTATLENGDSMQQTVTYVPNVANAEITLAASKDPVIADNNDLTTLTATVADTEGNAIANTEVTFTLPEDVKANFTLSDGGKVITDAEGKAKVTLKGTKAGAHTVTASMTGGKSEQLVVNFIADTLTAQVNLNVTEDNFIANNVGMTRLQATVTDGNGNPLANEAVTFTLPADVSASFTLGQGGSAITDINGKAEVTLSGTKSGTYPVTVSVNNYGVSDTKQVTLIADAGTAKLASLTSVYSFVVSTTEGATMTASVTDANGNPVEGIKVNFRGTSVTLSSTSVETDDRGFAEILVTSTEVGLKTVSASLADKPTEVISRLLNASADVNSATITSLEIPEGQVMVAQDVAVKAHVNDQFGNPVAHQPVTFSAEPSSQMIISQNTVSTNTQGVAEVTMTPERNGSYMVKASLPNGASLEKQLEAIDEKLTLTASSPLIGVYAPTGATLTATLTSANGTPVEGQVINFSVTPEGATLSGGKVRTNSSGQAPVVLTSNKVGTYTVTASFHNGVTIQTQTTVKVTGNSSTAHVASFIADPSTIAATNTDLSTLKATVEDGSGNLIEGLTVYFALKSGSATLTSLTAVTDQNGIATTSVKGAMTGSVTVSAVTTAGGMQTVDITLVAGPADTSQSVLKSNRSSLKGDYTDSAELRLVLHDISGNPIKVSEGMEFVQSGTNVPYIKISAIDYSLNINGDYKATVTGGGEGIATLIPVLNGVHQAGLSTTIQFTRAEDKIMSGTVSVNGTDLPTTTFPSQGFTGAYYQLNNDNFAPGKTAADYEFSSSASWVDVDATGKVTFKNVGSNSERITATPKSGGPSYVYEIRVKSWWVNAGEAFMIYSLAENFCSSNGYTLPRANYLNHCSSRGIGSLYSEWGDMGHYTTDAGFQSNMYWSSSPANSSEQYVVSLATGDQSVFEKLGFAYATCYKNL.

The first 26 residues, 1 to 26 (MGIKLRRLTAGICLITQLAFPMAAAA), serve as a signal peptide directing secretion. A LysM domain is found at 50–98 (VPYTLGALESAQSVAERFGISVAELRKLNQFRTFARGFDNVRQGDELDV). Positions 125-400 (TSQQIGSLLA…SRYDLVDRNN (276 aa)) are inverse autotransporter. Residues 513–605 (QKDSSVSLST…GVDAAKAPAV (93 aa)) are invasin 3 domain. Big-1 domains follow at residues 721–815 (IATL…VSFV), 822–913 (QVDL…VNFI), 920–1017 (ALTL…MTFV), 1024–1121 (VVVL…VTFV), 1128–1221 (QVVL…VHFI), 1229–1331 (IIEL…SINV), 1339–1432 (HLTL…VTYV), 1439–1535 (EITL…VNFI), 1542–1639 (QVNL…VTLI), 1646–1730 (KLAS…PTEV), 1746–1837 (ITSL…LEAI), 1840–1934 (KLTL…VKVT), and 1942–2034 (VASF…ITLV). A C-type lectin domain region spans residues 2236-2339 (KSWWVNAGEA…FAYATCYKNL (104 aa)).

The protein belongs to the intimin/invasin family.

The protein resides in the cell outer membrane. Its function is as follows. A cryptic inverse autotransporter, it is not expressed in wild-type strain MG1655. Upon overexpression shows increased adherence to polyvinyl chloride (PVC) plates and increased mature biofilm formation. Probably binds peptidoglycan. This Escherichia coli (strain K12) protein is Inverse autotransporter adhesin YeeJ (yeeJ).